A 602-amino-acid chain; its full sequence is Sodium- and chloride-dependent GABA transporter 2 (602 aa).

The Cytoplasmic portion of the chain corresponds to 1 to 40 (MDNRVSGTTSNGETKPVCPVMEKVEEDGTLEREQWTNKME). 3 helical membrane-spanning segments follow: residues 41 to 61 (FVLS…FPYL), 68 to 88 (GAFF…VFFL), and 121 to 141 (IVSL…FYLF). The Extracellular portion of the chain corresponds to 142-206 (SSFTTDLPWG…GIQHLGSLRW (65 aa)). Residues Cys-153 and Cys-162 are joined by a disulfide bond. N-linked (GlcNAc...) asparagine glycans are attached at residues Asn-169, Asn-173, and Asn-178. Helical transmembrane passes span 207–227 (ELVL…WKGV) and 233–253 (VVYF…IRGV). N-linked (GlcNAc...) asparagine glycosylation is present at Asn-269. The next 7 membrane-spanning stretches (helical) occupy residues 282 to 302 (AGTQ…ALGS), 319 to 339 (ILNS…LGFM), 366 to 386 (VVML…VVLL), 418 to 438 (ILIL…LTEG), 453 to 473 (GMCL…VYGA), 490 to 510 (PLIK…TFLF), and 528 to 548 (WWGD…IPAW). The Cytoplasmic portion of the chain corresponds to 549–602 (SIYKLRTLKGPLRERLRQLVCPAEDLPQKSQPELTSPATPMTSLLRLTELESNC). At Thr-587 the chain carries Phosphothreonine. A Phosphoserine modification is found at Ser-591.

Belongs to the sodium:neurotransmitter symporter (SNF) (TC 2.A.22) family. SLC6A13 subfamily. In terms of tissue distribution, brain, retina, and peripheral tissues. Expressed in hepatocytes (at protein level).

It is found in the cell membrane. The protein resides in the basolateral cell membrane. It catalyses the reaction 4-aminobutanoate(out) + chloride(out) + 2 Na(+)(out) = 4-aminobutanoate(in) + chloride(in) + 2 Na(+)(in). The enzyme catalyses taurine(out) + chloride(out) + 2 Na(+)(out) = taurine(in) + chloride(in) + 2 Na(+)(in). It carries out the reaction beta-alanine(out) + chloride(out) + 2 Na(+)(out) = beta-alanine(in) + chloride(in) + 2 Na(+)(in). The catalysed reaction is hypotaurine(out) + chloride(out) + 2 Na(+)(out) = hypotaurine(in) + chloride(in) + 2 Na(+)(in). Its activity is regulated as follows. GABA transport is inhibited by beta-alanine, L-2,4-Diaminobutyric acid, hypotaurine and nipecotic acid. Taurine transport is inhibited by hypotaurine, beta-alanine and nipecotic acid. In terms of biological role, mediates sodium- and chloride-dependent transport of gamma-aminobutyric acid (GABA). Mediates transport of taurine and is the major taurine transporter in hepatocytes. Can also mediate transport of beta-alanine and hypotaurine. This Rattus norvegicus (Rat) protein is Sodium- and chloride-dependent GABA transporter 2 (Slc6a13).